The chain runs to 380 residues: Tryptophan 2,3-dioxygenase (380 aa).

Substrate is bound by residues 57–61 (FIITH) and R128. Heme is bound at residue H313. Position 328 (T328) interacts with substrate.

It belongs to the tryptophan 2,3-dioxygenase family. In terms of assembly, homotetramer. Dimer of dimers. Requires heme as cofactor.

The catalysed reaction is L-tryptophan + O2 = N-formyl-L-kynurenine. It participates in amino-acid degradation; L-tryptophan degradation via kynurenine pathway; L-kynurenine from L-tryptophan: step 1/2. Its pathway is pigment biosynthesis; ommochrome biosynthesis. Heme-dependent dioxygenase that catalyzes the oxidative cleavage of the L-tryptophan (L-Trp) pyrrole ring and converts L-tryptophan to N-formyl-L-kynurenine. Catalyzes the oxidative cleavage of the indole moiety. The sequence is that of Tryptophan 2,3-dioxygenase from Drosophila willistoni (Fruit fly).